The sequence spans 376 residues: Succinyl-diaminopimelate desuccinylase (376 aa).

H67 contributes to the Zn(2+) binding site. Residue D69 is part of the active site. Position 100 (D100) interacts with Zn(2+). The active-site Proton acceptor is E134. Zn(2+) contacts are provided by E135, E163, and H349.

The protein belongs to the peptidase M20A family. DapE subfamily. As to quaternary structure, homodimer. It depends on Zn(2+) as a cofactor. Co(2+) is required as a cofactor.

The enzyme catalyses N-succinyl-(2S,6S)-2,6-diaminopimelate + H2O = (2S,6S)-2,6-diaminopimelate + succinate. The protein operates within amino-acid biosynthesis; L-lysine biosynthesis via DAP pathway; LL-2,6-diaminopimelate from (S)-tetrahydrodipicolinate (succinylase route): step 3/3. Functionally, catalyzes the hydrolysis of N-succinyl-L,L-diaminopimelic acid (SDAP), forming succinate and LL-2,6-diaminopimelate (DAP), an intermediate involved in the bacterial biosynthesis of lysine and meso-diaminopimelic acid, an essential component of bacterial cell walls. The sequence is that of Succinyl-diaminopimelate desuccinylase from Shewanella denitrificans (strain OS217 / ATCC BAA-1090 / DSM 15013).